The primary structure comprises 155 residues: Ribosomal RNA large subunit methyltransferase H (155 aa).

S-adenosyl-L-methionine-binding positions include L72, G103, and 122-127; that span reads LSKLTM.

The protein belongs to the RNA methyltransferase RlmH family. In terms of assembly, homodimer.

It is found in the cytoplasm. It catalyses the reaction pseudouridine(1915) in 23S rRNA + S-adenosyl-L-methionine = N(3)-methylpseudouridine(1915) in 23S rRNA + S-adenosyl-L-homocysteine + H(+). Specifically methylates the pseudouridine at position 1915 (m3Psi1915) in 23S rRNA. The chain is Ribosomal RNA large subunit methyltransferase H from Methylobacillus flagellatus (strain ATCC 51484 / DSM 6875 / VKM B-1610 / KT).